Consider the following 597-residue polypeptide: Probable translation initiation factor IF-2 (597 aa).

The 218-residue stretch at 4-221 (IRQPIIAVLG…LIAGLSQKYL (218 aa)) folds into the tr-type G domain. The segment at 13–20 (GHVDHGKT) is G1. GTP is bound at residue 13-20 (GHVDHGKT). Positions 38–42 (GITQH) are G2. The interval 77–80 (DTPG) is G3. GTP is bound by residues 77–81 (DTPGH) and 131–134 (NKID). Residues 131–134 (NKID) are G4. Residues 199–201 (SAK) are G5.

Belongs to the TRAFAC class translation factor GTPase superfamily. Classic translation factor GTPase family. IF-2 subfamily.

In terms of biological role, function in general translation initiation by promoting the binding of the formylmethionine-tRNA to ribosomes. Seems to function along with eIF-2. The chain is Probable translation initiation factor IF-2 from Thermococcus onnurineus (strain NA1).